We begin with the raw amino-acid sequence, 468 residues long: Putative chitinase 1 (468 aa).

A signal peptide spans 1–21 (MDFYSSLLPFLILIYLEFCSG). The GH18 domain maps to 22–381 (FNRVCYYNGW…MSIIHGLGEY (360 aa)). Residues Cys26 and Cys51 are joined by a disulfide bond. Chitin contacts are provided by residues 73–74 (VF) and 100–103 (GGWD). Glu143 serves as the catalytic Proton donor. Chitin-binding positions include Tyr144, 213-216 (KMYD), and Trp353. Residues 386–440 (SDTLEAEREMINKKIRKAAREISYYSDKGNSTMAKKMEDKLNQLKDHLSAVQAHQ) are a coiled coil.

It belongs to the glycosyl hydrolase 18 family. In terms of tissue distribution, prismatic layer of shell (at protein level). Expressed primarily in the mantle with highest level in the outer epithelium of the mantle edge and lower level in the mantle pallium.

It is found in the secreted. The enzyme catalyses Random endo-hydrolysis of N-acetyl-beta-D-glucosaminide (1-&gt;4)-beta-linkages in chitin and chitodextrins.. The polypeptide is Putative chitinase 1 (Margaritifera margaritifera (Freshwater pearl mussel)).